A 239-amino-acid polypeptide reads, in one-letter code: 2,3,4,5-tetrahydropyridine-2,6-dicarboxylate N-acetyltransferase (239 aa).

Belongs to the transferase hexapeptide repeat family. DapH subfamily.

The catalysed reaction is (S)-2,3,4,5-tetrahydrodipicolinate + acetyl-CoA + H2O = L-2-acetamido-6-oxoheptanedioate + CoA. It participates in amino-acid biosynthesis; L-lysine biosynthesis via DAP pathway; LL-2,6-diaminopimelate from (S)-tetrahydrodipicolinate (acetylase route): step 1/3. In terms of biological role, catalyzes the transfer of an acetyl group from acetyl-CoA to tetrahydrodipicolinate. The chain is 2,3,4,5-tetrahydropyridine-2,6-dicarboxylate N-acetyltransferase from Staphylococcus saprophyticus subsp. saprophyticus (strain ATCC 15305 / DSM 20229 / NCIMB 8711 / NCTC 7292 / S-41).